A 101-amino-acid chain; its full sequence is UPF0235 protein Mevan_0378 (101 aa).

This sequence belongs to the UPF0235 family.

This is UPF0235 protein Mevan_0378 from Methanococcus vannielii (strain ATCC 35089 / DSM 1224 / JCM 13029 / OCM 148 / SB).